The sequence spans 116 residues: Large ribosomal subunit protein bL19 (116 aa).

This sequence belongs to the bacterial ribosomal protein bL19 family.

In terms of biological role, this protein is located at the 30S-50S ribosomal subunit interface and may play a role in the structure and function of the aminoacyl-tRNA binding site. This is Large ribosomal subunit protein bL19 from Geobacillus sp. (strain WCH70).